The sequence spans 1210 residues: Inner capsid protein VP3 (1210 aa).

A disordered region spans residues 1-28; that stretch reads MPRTSRNVRATEVATTAIPPSNAATDTT. Residues 113–136 form a C2H2-type zinc finger; it reads LRCQQCGAKFSSMTQLAEHVRTEH. The segment at 294–319 is disordered; it reads PHAGPQVRSVQSQDQQVYSVDSGPDP. Residues 299–315 show a composition bias toward low complexity; the sequence is QVRSVQSQDQQVYSVDS.

This sequence belongs to the turreted BTV-fold inner capsid family. As to quaternary structure, homodecamer; each decamer is made up of two conformers of VP2, called VP2A and VP2B. 12 homodecamers assemble to form an icosahedral capsid. Interacts with VP6.

The protein localises to the virion. Functionally, inner capsid protein that self-assembles to form an icosahedral capsid with a T=2 symmetry, which consists of 120 copies of VP2, with channels at each of its five-fold vertices. This capsid constitutes the innermost concentric layer of the viral mature particle. The protein is Inner capsid protein VP3 (S3) of Aquareovirus A (isolate Chum salmon/Japan/CSRV/1981) (AQRV-A).